The following is a 362-amino-acid chain: Spermidine/putrescine import ATP-binding protein PotA (362 aa).

One can recognise an ABC transporter domain in the interval 4–235; it reads IKLDHITKQY…PVNDFVARFI (232 aa). 37 to 44 lines the ATP pocket; the sequence is GPSGSGKT.

It belongs to the ABC transporter superfamily. Spermidine/putrescine importer (TC 3.A.1.11.1) family. As to quaternary structure, the complex is composed of two ATP-binding proteins (PotA), two transmembrane proteins (PotB and PotC) and a solute-binding protein (PotD).

The protein localises to the cell membrane. It catalyses the reaction ATP + H2O + polyamine-[polyamine-binding protein]Side 1 = ADP + phosphate + polyamineSide 2 + [polyamine-binding protein]Side 1.. Functionally, part of the ABC transporter complex PotABCD involved in spermidine/putrescine import. Responsible for energy coupling to the transport system. This chain is Spermidine/putrescine import ATP-binding protein PotA, found in Lactobacillus delbrueckii subsp. bulgaricus (strain ATCC BAA-365 / Lb-18).